Here is a 350-residue protein sequence, read N- to C-terminus: MIKKAIARVVEREDLSQSEMIQVMDQIMSGEATPAQIAAFITALRMKGETVAEIAGAARVMRDRATRIRVGKNVLDLDRDDINIDLETILDVVGTGGDGTNTFNISTTVSFVVAACGVKVAKHGNRSVSSACGSADVVEALGISLEVTPETVENCINEAGIGFLYAPALHGAMKFAIGPRKEIGIRTIFNILGPLTNPAGAPCQVLGVYREELVEKLAHVLKNLGCRRGFVVYGMDGMDEITLTTETRMAEVTPEEVKAWLFKPEDLGFARCTMDDLRGGDAVANAVTVRGILEGEKGPKRDVVLINAAFGLVAAGRAANPAEGVKLAVEALDSGAALAKLEKLKALTNA.

5-phospho-alpha-D-ribose 1-diphosphate-binding positions include Gly-94, 97–98 (GD), Thr-102, 104–107 (NIST), 122–130 (KHGNRSVSS), and Ser-134. Gly-94 lines the anthranilate pocket. Ser-106 is a binding site for Mg(2+). Asn-125 serves as a coordination point for anthranilate. Residue Arg-180 participates in anthranilate binding. Residues Asp-239 and Glu-240 each contribute to the Mg(2+) site.

This sequence belongs to the anthranilate phosphoribosyltransferase family. As to quaternary structure, homodimer. Requires Mg(2+) as cofactor.

It catalyses the reaction N-(5-phospho-beta-D-ribosyl)anthranilate + diphosphate = 5-phospho-alpha-D-ribose 1-diphosphate + anthranilate. It participates in amino-acid biosynthesis; L-tryptophan biosynthesis; L-tryptophan from chorismate: step 2/5. Its function is as follows. Catalyzes the transfer of the phosphoribosyl group of 5-phosphorylribose-1-pyrophosphate (PRPP) to anthranilate to yield N-(5'-phosphoribosyl)-anthranilate (PRA). The protein is Anthranilate phosphoribosyltransferase of Geotalea daltonii (strain DSM 22248 / JCM 15807 / FRC-32) (Geobacter daltonii).